Here is a 554-residue protein sequence, read N- to C-terminus: Arginine--tRNA ligase (554 aa).

Positions 132 to 142 (ANPTGPIHLGG) match the 'HIGH' region motif.

Belongs to the class-I aminoacyl-tRNA synthetase family. Monomer.

Its subcellular location is the cytoplasm. It carries out the reaction tRNA(Arg) + L-arginine + ATP = L-arginyl-tRNA(Arg) + AMP + diphosphate. This is Arginine--tRNA ligase from Clavibacter sepedonicus (Clavibacter michiganensis subsp. sepedonicus).